Here is a 646-residue protein sequence, read N- to C-terminus: WW domain-containing adapter protein with coiled-coil (646 aa).

The segment at 1 to 138 is disordered; sequence MVMYARKQQR…YDSADDWSEH (138 aa). The span at 23-37 shows a compositional bias: polar residues; the sequence is QPFQALKYSSKSHPS. Basic and acidic residues predominate over residues 38–50; that stretch reads SGDHRHEKMRDAA. Ser-53 carries the phosphoserine modification. Polar residues predominate over residues 61-75; the sequence is RSNSPENKYSDSTGH. Positions 103–122 are enriched in low complexity; that stretch reads NHSALHSSNSHSSNPSNNPS. Positions 129 to 162 constitute a WW domain; sequence YDSADDWSEHISSSGKKYYYNCRTEVSQWEKPKE. Ser-131 and Ser-142 each carry phosphoserine. 2 stretches are compositionally biased toward basic and acidic residues: residues 158–174 and 182–191; these read EKPKEWLEREQRQKEAN and PKDRDYRREV. Disordered stretches follow at residues 158–352 and 428–541; these read EKPK…PQST and TQAQ…TATV. The segment covering 211–225 has biased composition (polar residues); the sequence is DASSLLPQNILSQTS. The residue at position 225 (Ser-225) is a Phosphoserine. The span at 226 to 239 shows a compositional bias: basic and acidic residues; that stretch reads RHNDKDYRLPRAET. A compositionally biased stretch (low complexity) spans 252 to 267; it reads PVVHPTATPSTVPSSP. Residues 284-300 show a composition bias toward polar residues; the sequence is GASTLSKLPTPTASLPA. Thr-293 carries the phosphothreonine modification. Residue Lys-302 is modified to N6-acetyllysine. Polar residues predominate over residues 316–331; that stretch reads SHSCTTPSTSSASGLN. The span at 332–351 shows a compositional bias: low complexity; it reads PTSAPPTSASAVPVSPVPQS. A compositionally biased stretch (polar residues) spans 428-463; it reads TQAQPSNQSPMSLTSDASSPRSYVSPRISTPQTNTV. Ser-446 is modified (phosphoserine). Thr-471 carries the phosphothreonine modification. Polar residues predominate over residues 490-503; sequence VSHSATQQPVTADK. A phosphoserine mark is found at Ser-511, Ser-523, and Ser-525. The segment covering 511-524 has biased composition (low complexity); the sequence is SPRSLQRLSSQRSP. Over residues 528–541 the composition is skewed to polar residues; the sequence is PNHTCSSNASTATV. Residues 617–643 are a coiled coil; the sequence is QATLREQRILFLRQQIKELEKLKNQNS.

Interacts (via coiled coil domain) with RNF20, RNF40 and UBE2A. Interacts (via WW domain) with RNA polymerase II. Interacts with MTOR and other components of the MTOR pathway including RPTOR, RUVBL1, RUVBL2, TTI1 and TTI2. Phosphorylated on tyrosine residues.

The protein resides in the nucleus speckle. It is found in the nucleus. In terms of biological role, acts as a linker between gene transcription and histone H2B monoubiquitination at 'Lys-120' (H2BK120ub1). Interacts with the RNA polymerase II transcriptional machinery via its WW domain and with RNF20-RNF40 via its coiled coil region, thereby linking and regulating H2BK120ub1 and gene transcription. Regulates the cell-cycle checkpoint activation in response to DNA damage. Positive regulator of amino acid starvation-induced autophagy. Also acts as a negative regulator of basal autophagy. Positively regulates MTOR activity by promoting, in an energy-dependent manner, the assembly of the TTT complex composed of TELO2, TTI1 and TTI2 and the RUVBL complex composed of RUVBL1 and RUVBL2 into the TTT-RUVBL complex. This leads to the dimerization of the mTORC1 complex and its subsequent activation. May negatively regulate the ubiquitin proteasome pathway. The protein is WW domain-containing adapter protein with coiled-coil (Wac) of Mus musculus (Mouse).